A 66-amino-acid chain; its full sequence is Large ribosomal subunit protein bL33c (66 aa).

This sequence belongs to the bacterial ribosomal protein bL33 family.

The protein localises to the plastid. The protein resides in the chloroplast. This chain is Large ribosomal subunit protein bL33c, found in Nandina domestica (Heavenly bamboo).